A 364-amino-acid chain; its full sequence is MSNAIESLGSLWGPLLVLGQIGLFTLVLLLSIAFLLLLDRKVWAGVMMRKGPNVVGPFGLLQSFADFGKFLLKEIVIPAGANKAVFILAPILTCTLAFVTWAAIPVAPGTATGTSWVIANLNVGVLYLFAISSLGVYGIIMGGWASNSKYPFLGALRSAAQMVSYEVSIGFVIVTVILLVGSMNLTTIVNNQDGGIQNWHVFSFQYFPLIVVMVPMFVIFFISALAETNRPPFDLPEAESELVAGYQVEYGSTPYLLFMLGEYLNIVLMCAMMTILFLGGWHGPISLGPELTANLPPLLLSLSGLAWFMGKVLFCFFLFALVKAIVPRYRYDQLMRLGWKIFLPTSLAAVIIVAGYVTFVGGLS.

The next 8 membrane-spanning stretches (helical) occupy residues 15 to 35, 84 to 104, 123 to 143, 169 to 189, 206 to 226, 257 to 277, 302 to 322, and 341 to 361; these read LLVL…IAFL, AVFI…WAAI, VGVL…IMGG, IGFV…TTIV, YFPL…SALA, LFML…TILF, LSGL…FALV, and IFLP…TFVG.

This sequence belongs to the complex I subunit 1 family. NDH-1 is composed of 14 different subunits. Subunits NuoA, H, J, K, L, M, N constitute the membrane sector of the complex.

Its subcellular location is the cell inner membrane. The catalysed reaction is a quinone + NADH + 5 H(+)(in) = a quinol + NAD(+) + 4 H(+)(out). Its function is as follows. NDH-1 shuttles electrons from NADH, via FMN and iron-sulfur (Fe-S) centers, to quinones in the respiratory chain. The immediate electron acceptor for the enzyme in this species is believed to be ubiquinone. Couples the redox reaction to proton translocation (for every two electrons transferred, four hydrogen ions are translocated across the cytoplasmic membrane), and thus conserves the redox energy in a proton gradient. This subunit may bind ubiquinone. In Hyphomonas neptunium (strain ATCC 15444), this protein is NADH-quinone oxidoreductase subunit H.